Consider the following 218-residue polypeptide: Probable transaldolase (218 aa).

Catalysis depends on Lys-83, which acts as the Schiff-base intermediate with substrate.

The protein belongs to the transaldolase family. Type 3B subfamily.

Its subcellular location is the cytoplasm. The enzyme catalyses D-sedoheptulose 7-phosphate + D-glyceraldehyde 3-phosphate = D-erythrose 4-phosphate + beta-D-fructose 6-phosphate. It participates in carbohydrate degradation; pentose phosphate pathway; D-glyceraldehyde 3-phosphate and beta-D-fructose 6-phosphate from D-ribose 5-phosphate and D-xylulose 5-phosphate (non-oxidative stage): step 2/3. Transaldolase is important for the balance of metabolites in the pentose-phosphate pathway. The chain is Probable transaldolase from Thermotoga petrophila (strain ATCC BAA-488 / DSM 13995 / JCM 10881 / RKU-1).